Consider the following 377-residue polypeptide: Chaperone protein DnaJ (377 aa).

The 66-residue stretch at 5–70 (DYYEVLGVAK…QKRAAYDRYG (66 aa)) folds into the J domain. The segment at 137–215 (GFDTEIRVPS…CDGVGRTRRN (79 aa)) adopts a CR-type zinc-finger fold. Residues Cys-150, Cys-153, Cys-167, Cys-170, Cys-189, Cys-192, Cys-203, and Cys-206 each contribute to the Zn(2+) site. CXXCXGXG motif repeat units lie at residues 150–157 (CDTCHGSG), 167–174 (CRTCGGSG), 189–196 (CPTCHGTG), and 203–210 (CPSCDGVG).

It belongs to the DnaJ family. In terms of assembly, homodimer. Zn(2+) is required as a cofactor.

The protein resides in the cytoplasm. Participates actively in the response to hyperosmotic and heat shock by preventing the aggregation of stress-denatured proteins and by disaggregating proteins, also in an autonomous, DnaK-independent fashion. Unfolded proteins bind initially to DnaJ; upon interaction with the DnaJ-bound protein, DnaK hydrolyzes its bound ATP, resulting in the formation of a stable complex. GrpE releases ADP from DnaK; ATP binding to DnaK triggers the release of the substrate protein, thus completing the reaction cycle. Several rounds of ATP-dependent interactions between DnaJ, DnaK and GrpE are required for fully efficient folding. Also involved, together with DnaK and GrpE, in the DNA replication of plasmids through activation of initiation proteins. In Bordetella parapertussis (strain 12822 / ATCC BAA-587 / NCTC 13253), this protein is Chaperone protein DnaJ.